A 236-amino-acid polypeptide reads, in one-letter code: Phosphatidylserine decarboxylase proenzyme (236 aa).

S203 acts as the Schiff-base intermediate with substrate; via pyruvic acid in catalysis. S203 bears the Pyruvic acid (Ser); by autocatalysis mark.

This sequence belongs to the phosphatidylserine decarboxylase family. PSD-A subfamily. In terms of assembly, heterodimer of a large membrane-associated beta subunit and a small pyruvoyl-containing alpha subunit. Pyruvate is required as a cofactor. Is synthesized initially as an inactive proenzyme. Formation of the active enzyme involves a self-maturation process in which the active site pyruvoyl group is generated from an internal serine residue via an autocatalytic post-translational modification. Two non-identical subunits are generated from the proenzyme in this reaction, and the pyruvate is formed at the N-terminus of the alpha chain, which is derived from the carboxyl end of the proenzyme. The post-translation cleavage follows an unusual pathway, termed non-hydrolytic serinolysis, in which the side chain hydroxyl group of the serine supplies its oxygen atom to form the C-terminus of the beta chain, while the remainder of the serine residue undergoes an oxidative deamination to produce ammonia and the pyruvoyl prosthetic group on the alpha chain.

It is found in the cell membrane. It catalyses the reaction a 1,2-diacyl-sn-glycero-3-phospho-L-serine + H(+) = a 1,2-diacyl-sn-glycero-3-phosphoethanolamine + CO2. The protein operates within phospholipid metabolism; phosphatidylethanolamine biosynthesis; phosphatidylethanolamine from CDP-diacylglycerol: step 2/2. In terms of biological role, catalyzes the formation of phosphatidylethanolamine (PtdEtn) from phosphatidylserine (PtdSer). The polypeptide is Phosphatidylserine decarboxylase proenzyme (Saccharopolyspora erythraea (strain ATCC 11635 / DSM 40517 / JCM 4748 / NBRC 13426 / NCIMB 8594 / NRRL 2338)).